Reading from the N-terminus, the 332-residue chain is Small ribosomal subunit biogenesis GTPase RsgA (332 aa).

The CP-type G domain maps to 103–259 (RQQLIAANLD…LIDTPGMREL (157 aa)). GTP contacts are provided by residues 148-151 (TKVD) and 201-209 (GSSGAGKST). Zn(2+) contacts are provided by cysteine 281, cysteine 286, histidine 288, and cysteine 294.

This sequence belongs to the TRAFAC class YlqF/YawG GTPase family. RsgA subfamily. Monomer. Associates with 30S ribosomal subunit, binds 16S rRNA. It depends on Zn(2+) as a cofactor.

It is found in the cytoplasm. Functionally, one of several proteins that assist in the late maturation steps of the functional core of the 30S ribosomal subunit. Helps release RbfA from mature subunits. May play a role in the assembly of ribosomal proteins into the subunit. Circularly permuted GTPase that catalyzes slow GTP hydrolysis, GTPase activity is stimulated by the 30S ribosomal subunit. This Xylella fastidiosa (strain M23) protein is Small ribosomal subunit biogenesis GTPase RsgA.